A 184-amino-acid polypeptide reads, in one-letter code: NADH-quinone oxidoreductase subunit B (184 aa).

4 residues coordinate [4Fe-4S] cluster: cysteine 37, cysteine 38, cysteine 103, and cysteine 132.

It belongs to the complex I 20 kDa subunit family. NDH-1 is composed of 14 different subunits. Subunits NuoB, C, D, E, F, and G constitute the peripheral sector of the complex. Requires [4Fe-4S] cluster as cofactor.

It is found in the cell membrane. The enzyme catalyses a quinone + NADH + 5 H(+)(in) = a quinol + NAD(+) + 4 H(+)(out). Functionally, NDH-1 shuttles electrons from NADH, via FMN and iron-sulfur (Fe-S) centers, to quinones in the respiratory chain. The immediate electron acceptor for the enzyme in this species is believed to be a menaquinone. Couples the redox reaction to proton translocation (for every two electrons transferred, four hydrogen ions are translocated across the cytoplasmic membrane), and thus conserves the redox energy in a proton gradient. This Mycolicibacterium gilvum (strain PYR-GCK) (Mycobacterium gilvum (strain PYR-GCK)) protein is NADH-quinone oxidoreductase subunit B.